A 311-amino-acid polypeptide reads, in one-letter code: HPr kinase/phosphorylase (311 aa).

Residues histidine 139 and lysine 160 contribute to the active site. Residue 154 to 161 (GASGVGKS) coordinates ATP. A Mg(2+)-binding site is contributed by serine 161. Aspartate 178 serves as the catalytic Proton acceptor; for phosphorylation activity. Proton donor; for dephosphorylation activity. An important for the catalytic mechanism of both phosphorylation and dephosphorylation region spans residues 202–211 (LEIRGIGIID). Glutamate 203 serves as a coordination point for Mg(2+). Arginine 244 is a catalytic residue. The segment at 265–270 (PVRPGR) is important for the catalytic mechanism of dephosphorylation.

This sequence belongs to the HPrK/P family. In terms of assembly, homohexamer. Requires Mg(2+) as cofactor.

The enzyme catalyses [HPr protein]-L-serine + ATP = [HPr protein]-O-phospho-L-serine + ADP + H(+). The catalysed reaction is [HPr protein]-O-phospho-L-serine + phosphate + H(+) = [HPr protein]-L-serine + diphosphate. Its function is as follows. Catalyzes the ATP- as well as the pyrophosphate-dependent phosphorylation of a specific serine residue in HPr, a phosphocarrier protein of the phosphoenolpyruvate-dependent sugar phosphotransferase system (PTS). HprK/P also catalyzes the pyrophosphate-producing, inorganic phosphate-dependent dephosphorylation (phosphorolysis) of seryl-phosphorylated HPr (P-Ser-HPr). The two antagonistic activities of HprK/P are regulated by several intracellular metabolites, which change their concentration in response to the absence or presence of rapidly metabolisable carbon sources (glucose, fructose, etc.) in the growth medium. Therefore, by controlling the phosphorylation state of HPr, HPrK/P is a sensor enzyme that plays a major role in the regulation of carbon metabolism and sugar transport: it mediates carbon catabolite repression (CCR), and regulates PTS-catalyzed carbohydrate uptake and inducer exclusion. This Exiguobacterium sibiricum (strain DSM 17290 / CCUG 55495 / CIP 109462 / JCM 13490 / 255-15) protein is HPr kinase/phosphorylase.